We begin with the raw amino-acid sequence, 139 residues long: Translation initiation factor 2 subunit beta (139 aa).

This sequence belongs to the eIF-2-beta/eIF-5 family. As to quaternary structure, heterotrimer composed of an alpha, a beta and a gamma chain.

In terms of biological role, eIF-2 functions in the early steps of protein synthesis by forming a ternary complex with GTP and initiator tRNA. This is Translation initiation factor 2 subunit beta from Sulfurisphaera tokodaii (strain DSM 16993 / JCM 10545 / NBRC 100140 / 7) (Sulfolobus tokodaii).